Here is a 401-residue protein sequence, read N- to C-terminus: Glycerol-3-phosphate dehydrogenase [NAD(+)] 1 (401 aa).

NAD(+) contacts are provided by residues 40–45, Phe128, Lys151, and Ala184; that span reads GSGNWG. Lys151 serves as a coordination point for substrate. The active-site Proton acceptor is Lys244. 2 residues coordinate NAD(+): Arg309 and Gln338. A substrate-binding site is contributed by 309–310; it reads RN.

Belongs to the NAD-dependent glycerol-3-phosphate dehydrogenase family.

Its subcellular location is the cytoplasm. It carries out the reaction sn-glycerol 3-phosphate + NAD(+) = dihydroxyacetone phosphate + NADH + H(+). The protein is Glycerol-3-phosphate dehydrogenase [NAD(+)] 1 (GPD1) of Zygosaccharomyces rouxii.